The sequence spans 225 residues: Probable CDP-diacylglycerol--inositol 3-phosphatidyltransferase 2 (225 aa).

Helical transmembrane passes span 6–26 (PATLSVYLYIPNIVGYMRVLL) and 29–49 (IAFSVCFSNKTLFSLLYFFSF). 2 residues coordinate Mg(2+): Asp52 and Asp55. 3 residues coordinate a CDP-1,2-diacyl-sn-glycerol: Gly56, Arg60, and Ser66. Mg(2+) is bound by residues Asp73 and Asp77. Catalysis depends on Asp77, which acts as the Proton acceptor. Helical transmembrane passes span 84 to 104 (LLVILSQIYRPSLVFLSLLAL), 143 to 163 (MFMGYCCVSCEVLYIILLLIA), and 184 to 204 (LSLLLALSIFGWSIKQIINVI).

It belongs to the CDP-alcohol phosphatidyltransferase class-I family. Mg(2+) is required as a cofactor. It depends on Mn(2+) as a cofactor.

It is found in the membrane. It carries out the reaction a CDP-1,2-diacyl-sn-glycerol + myo-inositol = a 1,2-diacyl-sn-glycero-3-phospho-(1D-myo-inositol) + CMP + H(+). In terms of biological role, catalyzes the biosynthesis of phosphatidylinositol (PtdIns) as well as PtdIns:inositol exchange reaction. May thus act to reduce an excessive cellular PtdIns content. The exchange activity is due to the reverse reaction of PtdIns synthase and is dependent on CMP, which is tightly bound to the enzyme. This Arabidopsis thaliana (Mouse-ear cress) protein is Probable CDP-diacylglycerol--inositol 3-phosphatidyltransferase 2 (PIS2).